The following is a 550-amino-acid chain: MAAKEIRFSDDARQRMMSGVNQLANAVKVTLGPRGRNAVLEKSFGAPTVTKDGVSVAKEIELEDHFENMGAQMLKEVSSQTSDVAGDGTTTATVLAQAILREGMKSLAAGMSPMELKKGIEKATEAASNYLSDELSKPCEDDNSIAQVGTISANSDEAVGRIIADAMGKVGKEGVITVEEGSGLDNELDVVEGMQFDRGYLSPYFVTDQQTMKAELEDAAILLHDKKISNIRDLLPLLEGVAKQNRPLLIIAEEVEGEALATLVVNNLRGIVKVAAVKAPGFGDRRKAMLQDIAILTGGTVISDEVGMTLENATVDDLGTAKKVQISKEETTIVGGAGRHDDIMARVEQIRAQMEESTSDYDKEKLQERVAKLVGGVAVIKVGAATEVEMKEKKARVEDALHATRAAVEEGIVPGGGTALIRALAALEGLSGANEEQTQGIALVRRAMEEPLRQLVLNAGEDASVVVNKVREGTGNHGYNVATGEYGDLVQAGVLDPTKVTRSALQNAASVAALMLTTEAMVADLPKKDDEGGGGDMGGMGGMGGMGGMM.

ATP-binding positions include T30 to P33, K51, D87 to T91, G416, N480 to A482, and D496. The disordered stretch occupies residues L525–M550. The span at G534–M550 shows a compositional bias: gly residues.

The protein belongs to the chaperonin (HSP60) family. Forms a cylinder of 14 subunits composed of two heptameric rings stacked back-to-back. Interacts with the co-chaperonin GroES.

The protein localises to the cytoplasm. It catalyses the reaction ATP + H2O + a folded polypeptide = ADP + phosphate + an unfolded polypeptide.. Together with its co-chaperonin GroES, plays an essential role in assisting protein folding. The GroEL-GroES system forms a nano-cage that allows encapsulation of the non-native substrate proteins and provides a physical environment optimized to promote and accelerate protein folding. This is Chaperonin GroEL from Halorhodospira halophila (strain DSM 244 / SL1) (Ectothiorhodospira halophila (strain DSM 244 / SL1)).